We begin with the raw amino-acid sequence, 97 residues long: Small ribosomal subunit protein bS20 (97 aa).

This sequence belongs to the bacterial ribosomal protein bS20 family.

Binds directly to 16S ribosomal RNA. In Prochlorococcus marinus (strain MIT 9215), this protein is Small ribosomal subunit protein bS20.